Reading from the N-terminus, the 524-residue chain is Coronin-2A (524 aa).

WD repeat units lie at residues 80-120, 130-170, 178-217, 220-263, and 269-308; these read GHRG…LTRN, GHAR…SVIA, CHQDVILSMSFNTNGSLLATTCKDRKIRIVDPRLGIVLQE, YKGH…VPLT, and GSSGVLFPFFDSDTSMLYIVGKGDGNIRYYEVSMEKPHLT. Residues 403–436 are disordered; the sequence is LLDSQTLPPERPLSNSMVQVSPQPLEPMKQPAED. Residues 404 to 424 show a composition bias toward polar residues; that stretch reads LDSQTLPPERPLSNSMVQVSP. The stretch at 484 to 523 forms a coiled coil; that stretch reads QMFYRQQEEIRRLRELLIQREVQTKQLELEIKNLRMALGQ.

It belongs to the WD repeat coronin family. Binds actin. Component of the N-Cor repressor complex, at least composed of NCOR1, NCOR2, HDAC3, TBL1X, TBL1R, CORO2A and GPS2.

This chain is Coronin-2A (Coro2a), found in Mus musculus (Mouse).